The chain runs to 711 residues: Polyribonucleotide nucleotidyltransferase (711 aa).

Residues D486 and D492 each coordinate Mg(2+). One can recognise a KH domain in the interval 553–612 (PRIHTIKINPDKIKDVIGKGGSVIRALTEETGTTIEIEDDGTVKIAATDGDKAQHAIRRI). The 69-residue stretch at 622 to 690 (GRIYNGKVTR…RQGRVRLSIK (69 aa)) folds into the S1 motif domain. The disordered stretch occupies residues 689 to 711 (IKEATEQTPSAAAPEAPAAEQGE). A compositionally biased stretch (low complexity) spans 694–711 (EQTPSAAAPEAPAAEQGE).

Belongs to the polyribonucleotide nucleotidyltransferase family. In terms of assembly, component of the RNA degradosome, which is a multiprotein complex involved in RNA processing and mRNA degradation. The cofactor is Mg(2+).

The protein localises to the cytoplasm. It carries out the reaction RNA(n+1) + phosphate = RNA(n) + a ribonucleoside 5'-diphosphate. In terms of biological role, involved in mRNA degradation. Catalyzes the phosphorolysis of single-stranded polyribonucleotides processively in the 3'- to 5'-direction. In Klebsiella pneumoniae subsp. pneumoniae (strain ATCC 700721 / MGH 78578), this protein is Polyribonucleotide nucleotidyltransferase.